Here is a 326-residue protein sequence, read N- to C-terminus: Protein phosphatase 1 regulatory subunit SDS22 homolog (326 aa).

A disordered region spans residues 1–22 (MSNDKSAEVVVLPRENDEESKE). 12 LRR repeats span residues 35-57 (DIDSPEIDLTHTRADHIPDLTGF), 58-80 (PKIEELRMRNNLLVSISPTISSL), 81-102 (VTLTSLDLYENQLTEISHLESL), 103-126 (VNLVSLDLSYNRIRQINGLDKLTK), 128-146 (ETLYLVSNKIEKIENLEAL), 147-170 (TQLKLLELGDNRIKKIENIGHLVN), 172-190 (DELFIGKNKIRQLEGVETL), 191-212 (QKLSVLSLPGNRIVKIENVEQL), 213-236 (NNLKELYLSDQGLQDIHGVEPLTN), 238-256 (LLLDVANNEIKTFSGVERL), 257-280 (ESLNDFWANDNKVESFSEIEQLSK), and 281-304 (LKGLQTVYLERNPFYFNDTNQYRR).

It belongs to the SDS22 family.

The protein resides in the nucleus. Its function is as follows. Regulatory subunit of protein phosphatase 1. The chain is Protein phosphatase 1 regulatory subunit SDS22 homolog (sds-22) from Caenorhabditis elegans.